Here is a 358-residue protein sequence, read N- to C-terminus: Trace amine-associated receptor 7b (358 aa).

The Extracellular segment spans residues 1–47 (MATDDDRFPWDQDSILSRDLLSASSMQLCYEKLNRSCVRSPYSPGPR). Residue asparagine 34 is glycosylated (N-linked (GlcNAc...) asparagine). Intrachain disulfides connect cysteine 37-cysteine 201 and cysteine 120-cysteine 205. The chain crosses the membrane as a helical span at residues 48–68 (LILYAVFGFGAVLAVCGNLLV). Topologically, residues 69–83 (MTSILHFRQLHSPAN) are cytoplasmic. A helical membrane pass occupies residues 84–104 (FLVASLACADFLVGLTVMPFS). Residues 105–125 (MVRSVEGCWYFGDIYCKFHSS) lie on the Extracellular side of the membrane. The chain crosses the membrane as a helical span at residues 126 to 147 (FDGSFCYSSIFHLCFISADRYI). Residues 148-166 (AVSDPLIYPTRFTASVSGK) are Cytoplasmic-facing. Residues 167-187 (CITFSWLLSIIYSFSLFYTGV) traverse the membrane as a helical segment. Over 188–211 (NEAGLEDLVSALTCVGGCQIAVNQ) the chain is Extracellular. Asparagine 210 carries N-linked (GlcNAc...) asparagine glycosylation. Residues 212-232 (SWVFINFLLFLVPALVMMTVY) traverse the membrane as a helical segment. The Cytoplasmic segment spans residues 233 to 274 (SKIFLIAKQQAQNIEKMGKQTARASESYKDRVAKRERKAAKT). The helical transmembrane segment at 275–295 (LGIAVAAFLLSWLPYFIDSII) threads the bilayer. Over 296–309 (DAFLGFVTPTYVYE) the chain is Extracellular. Residues 310–332 (ILVWIGYYNSAMNPLIYAFFYPW) form a helical membrane-spanning segment. The Cytoplasmic segment spans residues 333–358 (FRKAIKLIVTGKILRENSSATNLFPE).

It belongs to the G-protein coupled receptor 1 family.

It is found in the cell membrane. Its function is as follows. Olfactory receptor specific for N,N-dimethylalkylamines trace amines, such as N,N-dimethylcyclohexylamine. Trace amine compounds are enriched in animal body fluids and act on trace amine-associated receptors (TAARs) to elicit both intraspecific and interspecific innate behaviors. Ligand-binding causes a conformation change that triggers signaling via G(s)-class of G alpha proteins (GNAL or GNAS). The polypeptide is Trace amine-associated receptor 7b (Rattus norvegicus (Rat)).